The sequence spans 40 residues: Photosystem II reaction center protein J (40 aa).

A helical membrane pass occupies residues Ile8–Phe28.

The protein belongs to the PsbJ family. As to quaternary structure, PSII is composed of 1 copy each of membrane proteins PsbA, PsbB, PsbC, PsbD, PsbE, PsbF, PsbH, PsbI, PsbJ, PsbK, PsbL, PsbM, PsbT, PsbX, PsbY, PsbZ, Psb30/Ycf12, at least 3 peripheral proteins of the oxygen-evolving complex and a large number of cofactors. It forms dimeric complexes.

Its subcellular location is the plastid. The protein localises to the chloroplast thylakoid membrane. Functionally, one of the components of the core complex of photosystem II (PSII). PSII is a light-driven water:plastoquinone oxidoreductase that uses light energy to abstract electrons from H(2)O, generating O(2) and a proton gradient subsequently used for ATP formation. It consists of a core antenna complex that captures photons, and an electron transfer chain that converts photonic excitation into a charge separation. This chain is Photosystem II reaction center protein J, found in Cucumis sativus (Cucumber).